Consider the following 469-residue polypeptide: 3-isopropylmalate dehydratase large subunit (469 aa).

C350, C410, and C413 together coordinate [4Fe-4S] cluster.

This sequence belongs to the aconitase/IPM isomerase family. LeuC type 1 subfamily. In terms of assembly, heterodimer of LeuC and LeuD. [4Fe-4S] cluster serves as cofactor.

It catalyses the reaction (2R,3S)-3-isopropylmalate = (2S)-2-isopropylmalate. It participates in amino-acid biosynthesis; L-leucine biosynthesis; L-leucine from 3-methyl-2-oxobutanoate: step 2/4. Catalyzes the isomerization between 2-isopropylmalate and 3-isopropylmalate, via the formation of 2-isopropylmaleate. The polypeptide is 3-isopropylmalate dehydratase large subunit (Chelativorans sp. (strain BNC1)).